The chain runs to 179 residues: Large ribosomal subunit protein uL5 (179 aa).

It belongs to the universal ribosomal protein uL5 family. As to quaternary structure, part of the 50S ribosomal subunit; part of the 5S rRNA/L5/L18/L25 subcomplex. Contacts the 5S rRNA and the P site tRNA. Forms a bridge to the 30S subunit in the 70S ribosome.

This is one of the proteins that bind and probably mediate the attachment of the 5S RNA into the large ribosomal subunit, where it forms part of the central protuberance. In the 70S ribosome it contacts protein S13 of the 30S subunit (bridge B1b), connecting the 2 subunits; this bridge is implicated in subunit movement. Contacts the P site tRNA; the 5S rRNA and some of its associated proteins might help stabilize positioning of ribosome-bound tRNAs. The chain is Large ribosomal subunit protein uL5 from Geotalea uraniireducens (strain Rf4) (Geobacter uraniireducens).